A 281-amino-acid polypeptide reads, in one-letter code: Spermatogenesis-associated serine-rich protein 1 (281 aa).

Residues 1–14 (MEAARDAQHSDVLE) show a composition bias toward basic and acidic residues. Residues 1-92 (MEAARDAQHS…SSSAQANRSL (92 aa)) are disordered. A compositionally biased stretch (polar residues) spans 21-37 (SRTSSHQNRRASLSSDG). Residue Thr-53 is modified to Phosphothreonine. The span at 54-65 (PSDTASGLGQKT) shows a compositional bias: polar residues. Over residues 66-85 (SSTSSSSSSSSSSSPSSSSS) the composition is skewed to low complexity. Ser-71, Ser-74, Ser-77, Ser-78, Ser-79, and Ser-91 each carry phosphoserine.

As to expression, detected in pachytene spermatocytes and round spermatids.

The polypeptide is Spermatogenesis-associated serine-rich protein 1 (Spats1) (Rattus norvegicus (Rat)).